Reading from the N-terminus, the 135-residue chain is Large ribosomal subunit protein bL17 (135 aa).

The protein belongs to the bacterial ribosomal protein bL17 family. In terms of assembly, part of the 50S ribosomal subunit. Contacts protein L32.

This is Large ribosomal subunit protein bL17 from Rhodopseudomonas palustris (strain BisB18).